A 182-amino-acid polypeptide reads, in one-letter code: Adenine phosphoribosyltransferase (182 aa).

The protein belongs to the purine/pyrimidine phosphoribosyltransferase family. Homodimer.

It is found in the cytoplasm. The enzyme catalyses AMP + diphosphate = 5-phospho-alpha-D-ribose 1-diphosphate + adenine. Its pathway is purine metabolism; AMP biosynthesis via salvage pathway; AMP from adenine: step 1/1. In terms of biological role, catalyzes a salvage reaction resulting in the formation of AMP, that is energically less costly than de novo synthesis. The protein is Adenine phosphoribosyltransferase of Campylobacter concisus (strain 13826).